A 104-amino-acid polypeptide reads, in one-letter code: Ig kappa chain V region XP-1 (104 aa).

Positions 1-24 (ADIVMTQTPASVSEPVGGTVTIKC) are framework-1. The complementarity-determining-1 stretch occupies residues 25 to 35 (QASQSIFBBLA). The framework-2 stretch occupies residues 36–49 (WYQKPGZPPKGLLY). The complementarity-determining-2 stretch occupies residues 50 to 56 (TBYTLAS). Residues 57–88 (GVSSRFSGGGSGTBFTLTISDLECABAATYYC) form a framework-3 region. A complementarity-determining-3 region spans residues 89–100 (EXTGVSZBXBKG). Positions 101–104 (FGGG) are framework-4.

The sequence is that of Ig kappa chain V region XP-1 from Oryctolagus cuniculus (Rabbit).